A 251-amino-acid chain; its full sequence is Phosphate import ATP-binding protein PstB 2 (251 aa).

Residues 5-246 (ITTKDVHLYY…PDKEQTADYL (242 aa)) enclose the ABC transporter domain. Position 37 to 44 (37 to 44 (GPSGCGKS)) interacts with ATP.

Belongs to the ABC transporter superfamily. Phosphate importer (TC 3.A.1.7) family. As to quaternary structure, the complex is composed of two ATP-binding proteins (PstB), two transmembrane proteins (PstC and PstA) and a solute-binding protein (PstS).

The protein resides in the cell membrane. It catalyses the reaction phosphate(out) + ATP + H2O = ADP + 2 phosphate(in) + H(+). Part of the ABC transporter complex PstSACB involved in phosphate import. Responsible for energy coupling to the transport system. This is Phosphate import ATP-binding protein PstB 2 from Ligilactobacillus salivarius (strain UCC118) (Lactobacillus salivarius).